The chain runs to 637 residues: MIKISLKNGKEIEVEKGLKVIDIAAKLSISLSKKALGAVVDGKVVELNYKINKDCKVEILTFEDEEGKKILRHTASHILAQAIKRLYPEVKLAIGPAIDSGFYYDVDAEFSFTPELLEKIEGKMNEIIKENIKLERFELPREEAIKFMEEKNEPYKVELIKDLPEDSIISFYKQGDFVDLCAGPHVPSTGRAKAVKLLSIAGAYWRGNENNKMLQRIYGTVFEKKSDLQDYLKLMEEAKKRDHRKLGKELDLFSIHEEGPGFPFFHPKGMVIRNTLQNFWREMHYKADYSEIMTPIILNEELWHRSGHWDHYKENMYFTKIDDGNYAIKPMNCPGSILVYKNDIRSYRDLPKRYAEMGVVHRHEKSGALHGLMRVRCFTQDDAHIFVTKDDIADEIIKVIDLIDNFYKIFGFEYFVELSTRPEDSMGSDEDWEAATEGLKNALKMVGLDYKINEGDGAFYGPKIDFHLKDCIGRTWQCGTVQLDFQMPEKFDLNYIGADGEKHRPVMIHRVVFGSIERFIGILIEHYAGAFPAWIAPVQVQVMNITDAQADYVAEVAKTLKENNIRVECDIRNEKIGYKIREAQMHKVPYMIILGDKEMKDKNISVRSRKEGDIGAMSLEDFILKLKEEIDKKISHV.

Residues 1–61 (MIKISLKNGK…NKDCKVEILT (61 aa)) enclose the TGS domain. Residues 242-532 (DHRKLGKELD…LIEHYAGAFP (291 aa)) are catalytic. Residues C333, H384, and H509 each coordinate Zn(2+).

The protein belongs to the class-II aminoacyl-tRNA synthetase family. As to quaternary structure, homodimer. It depends on Zn(2+) as a cofactor.

Its subcellular location is the cytoplasm. It carries out the reaction tRNA(Thr) + L-threonine + ATP = L-threonyl-tRNA(Thr) + AMP + diphosphate + H(+). Its function is as follows. Catalyzes the attachment of threonine to tRNA(Thr) in a two-step reaction: L-threonine is first activated by ATP to form Thr-AMP and then transferred to the acceptor end of tRNA(Thr). Also edits incorrectly charged L-seryl-tRNA(Thr). This is Threonine--tRNA ligase from Clostridium kluyveri (strain NBRC 12016).